Consider the following 203-residue polypeptide: ATP-dependent Clp protease proteolytic subunit 1 (203 aa).

Ser101 (nucleophile) is an active-site residue. His126 is a catalytic residue.

This sequence belongs to the peptidase S14 family. Fourteen ClpP subunits assemble into 2 heptameric rings which stack back to back to give a disk-like structure with a central cavity, resembling the structure of eukaryotic proteasomes.

The protein resides in the cytoplasm. It carries out the reaction Hydrolysis of proteins to small peptides in the presence of ATP and magnesium. alpha-casein is the usual test substrate. In the absence of ATP, only oligopeptides shorter than five residues are hydrolyzed (such as succinyl-Leu-Tyr-|-NHMec, and Leu-Tyr-Leu-|-Tyr-Trp, in which cleavage of the -Tyr-|-Leu- and -Tyr-|-Trp bonds also occurs).. Functionally, cleaves peptides in various proteins in a process that requires ATP hydrolysis. Has a chymotrypsin-like activity. Plays a major role in the degradation of misfolded proteins. In Synechococcus sp. (strain JA-2-3B'a(2-13)) (Cyanobacteria bacterium Yellowstone B-Prime), this protein is ATP-dependent Clp protease proteolytic subunit 1.